A 179-amino-acid chain; its full sequence is Replication restart protein DnaT (179 aa).

The tract at residues 156-179 (GGLPKRDVNTVSEPDSQIPPGFRG) is disordered.

It belongs to the DnaT family. As to quaternary structure, homooligomerizes. Interacts with PriB. Component of the replication restart primosome. Primosome assembly occurs via a 'hand-off' mechanism. PriA binds to replication forks, subsequently PriB then DnaT bind; DnaT then displaces ssDNA to generate the helicase loading substrate.

Involved in the restart of stalled replication forks, which reloads the replicative helicase on sites other than the origin of replication. Can function in multiple replication restart pathways. Displaces ssDNA from a PriB-ssDNA complex. Probably forms a spiral filament on ssDNA. The sequence is that of Replication restart protein DnaT from Escherichia coli O1:K1 / APEC.